The following is a 545-amino-acid chain: MKFDPAEIREAAEKDFDGTWKRGVDYLERPSLERIYPRRSYPHGRPHPVFETIQRLREAYLRMGFTEMMNPVIVDAQEVHRQFGSEALAVLDRCFYLAGLPRPDIGISESRLSEISSIVGKELTAEEIEALREILHSYKKGAVEGDDLVPEISKAINASDSQVSMMLESVFPEFRELRPEPTSRTLRSHMTSGWFISLSNLWYRMPLPVRLFSVDRCFRREQSEDAARLMSYHSASCVVMDEDMSVDEGKAISEGLLSQFGFENFRFRPDEKRSKYYIPGTQIEVYAYHPGLVGSETKYGSGWVEIATFGVYSPTALAQYDIPYPVLNLGLGVERLAMILYGSKDLRALSYPQLQPDWSLKPIEIARMIHVDKSPMTVTGKEIARSVVETCVKYGNTPSPCEFDAWEGELFGRRIKVSVVEPEENTKLCGPAYLNEIVVYRNEILGIPRTPKWEAAFEEGVQTGIRFIDAFAELAAHEIEMATIEGRGSETRVRIVRTAGEINVRIDPALERYITSYKKRIDIRGPVFTTVRSELMQGDKHGEKT.

Substrate contacts are provided by residues His-189–Thr-191, Ser-234–Ser-236, Tyr-276–Tyr-277, and Asn-328.

The protein belongs to the class-II aminoacyl-tRNA synthetase family. O-phosphoseryl-tRNA(Cys) synthetase subfamily. Homotetramer. Interacts with SepCysS.

It catalyses the reaction tRNA(Cys) + O-phospho-L-serine + ATP = O-phospho-L-seryl-tRNA(Cys) + AMP + diphosphate. Its function is as follows. Catalyzes the attachment of O-phosphoserine (Sep) to tRNA(Cys). This Methanothrix thermoacetophila (strain DSM 6194 / JCM 14653 / NBRC 101360 / PT) (Methanosaeta thermophila) protein is O-phosphoserine--tRNA(Cys) ligase.